We begin with the raw amino-acid sequence, 162 residues long: NADH-quinone oxidoreductase subunit I (162 aa).

2 4Fe-4S ferredoxin-type domains span residues 54–83 (RRYE…IESE) and 93–122 (TRYD…ETQI). Cys63, Cys66, Cys69, Cys73, Cys102, Cys105, Cys108, and Cys112 together coordinate [4Fe-4S] cluster.

This sequence belongs to the complex I 23 kDa subunit family. In terms of assembly, NDH-1 is composed of 14 different subunits. Subunits NuoA, H, J, K, L, M, N constitute the membrane sector of the complex. It depends on [4Fe-4S] cluster as a cofactor.

Its subcellular location is the cell inner membrane. It carries out the reaction a quinone + NADH + 5 H(+)(in) = a quinol + NAD(+) + 4 H(+)(out). Its function is as follows. NDH-1 shuttles electrons from NADH, via FMN and iron-sulfur (Fe-S) centers, to quinones in the respiratory chain. The immediate electron acceptor for the enzyme in this species is believed to be ubiquinone. Couples the redox reaction to proton translocation (for every two electrons transferred, four hydrogen ions are translocated across the cytoplasmic membrane), and thus conserves the redox energy in a proton gradient. This is NADH-quinone oxidoreductase subunit I from Burkholderia vietnamiensis (strain G4 / LMG 22486) (Burkholderia cepacia (strain R1808)).